The sequence spans 321 residues: MSKPIQMERGVKYRDADKMALIPVKTVVTERQELLRKPEWMKIKLPADSTRIQGIKAAMRKNGLHSVCEEASCPNLSECFNHGTATFMILGAICTRRCPFCDVAHGRPVAPDANEPEKLAQTIADMGLRYVVITSVDRDDLRDGGAQHFADCIAAIRAKNPTIKIETLVPDFRGRMDRALEILTETPPDVFNHNLENVPRVYRQVRPGANYEWSLKLLERFKEAHPHIPTKSGLMVGLGETNAEIVEVMRDLRRHGVTMLTLGQYLQPSRHHLPVQRYVSPAEFDEMKEEAMAMGFTHAACGPFVRSSYHADLQAKGMEVK.

Residues cysteine 68, cysteine 73, cysteine 79, cysteine 94, cysteine 98, cysteine 101, and serine 308 each contribute to the [4Fe-4S] cluster site. A Radical SAM core domain is found at 80 to 297 (FNHGTATFMI…KEEAMAMGFT (218 aa)).

This sequence belongs to the radical SAM superfamily. Lipoyl synthase family. [4Fe-4S] cluster is required as a cofactor.

It localises to the cytoplasm. It carries out the reaction [[Fe-S] cluster scaffold protein carrying a second [4Fe-4S](2+) cluster] + N(6)-octanoyl-L-lysyl-[protein] + 2 oxidized [2Fe-2S]-[ferredoxin] + 2 S-adenosyl-L-methionine + 4 H(+) = [[Fe-S] cluster scaffold protein] + N(6)-[(R)-dihydrolipoyl]-L-lysyl-[protein] + 4 Fe(3+) + 2 hydrogen sulfide + 2 5'-deoxyadenosine + 2 L-methionine + 2 reduced [2Fe-2S]-[ferredoxin]. The protein operates within protein modification; protein lipoylation via endogenous pathway; protein N(6)-(lipoyl)lysine from octanoyl-[acyl-carrier-protein]: step 2/2. Catalyzes the radical-mediated insertion of two sulfur atoms into the C-6 and C-8 positions of the octanoyl moiety bound to the lipoyl domains of lipoate-dependent enzymes, thereby converting the octanoylated domains into lipoylated derivatives. This is Lipoyl synthase from Serratia proteamaculans (strain 568).